A 505-amino-acid polypeptide reads, in one-letter code: Histidine ammonia-lyase (505 aa).

The segment at residues 141–143 (ASG) is a cross-link (5-imidazolinone (Ala-Gly)). 2,3-didehydroalanine (Ser) is present on Ser142.

The protein belongs to the PAL/histidase family. Post-translationally, contains an active site 4-methylidene-imidazol-5-one (MIO), which is formed autocatalytically by cyclization and dehydration of residues Ala-Ser-Gly.

It is found in the cytoplasm. The catalysed reaction is L-histidine = trans-urocanate + NH4(+). It participates in amino-acid degradation; L-histidine degradation into L-glutamate; N-formimidoyl-L-glutamate from L-histidine: step 1/3. This Bacillus thuringiensis (strain Al Hakam) protein is Histidine ammonia-lyase.